We begin with the raw amino-acid sequence, 442 residues long: SPRY domain-containing protein 3 (442 aa).

Residues 17–204 (DLNLHYRFLN…VRLHLNAELG (188 aa)) form the B30.2/SPRY domain. The interval 371–394 (EGEEEEEEEEEEEDGEEIEPEHEG) is disordered. The span at 372–390 (GEEEEEEEEEEEDGEEIEP) shows a compositional bias: acidic residues.

This Homo sapiens (Human) protein is SPRY domain-containing protein 3 (SPRYD3).